The sequence spans 267 residues: U6 snRNA phosphodiesterase 1 (267 aa).

Residues 1–13 (MSSAPLVGYSSSG) show a composition bias toward polar residues. Residues 1–74 (MSSAPLVGYS…DSAKHGGRIR (74 aa)) are disordered. The active-site Proton acceptor is the histidine 122. 122-124 (HVS) contacts AMP. UMP contacts are provided by residues glutamine 166, tyrosine 204, and 208–212 (SFHIS). Residues tyrosine 204 and 206–212 (DPSFHIS) contribute to the AMP site. Histidine 210 (proton donor) is an active-site residue.

It belongs to the 2H phosphoesterase superfamily. USB1 family. In terms of assembly, interacts with PLRG1, CDC5L and PRPF19.

It localises to the nucleus. The catalysed reaction is a 3'-end uridylyl-uridine-RNA = a 3'-end 2',3'-cyclophospho-uridine-RNA + uridine. The enzyme catalyses a 3'-end uridylyl-adenosine-RNA = a 3'-end 2',3'-cyclophospho-uridine-RNA + adenosine. Functionally, 3'-5' RNA exonuclease that trims the 3' end of oligo(U) and oligo(A) tracts of the pre-U6 small nuclear RNA (snRNA) molecule, leading to the formation of a mature U6 snRNA 3' end-terminated with a 2',3'-cyclic phosphate. Participates in the U6 snRNA 3' end processing that prevents U6 snRNA degradation. In addition also removes uridines from the 3' end of U6atac snRNA and possibly the vault RNA VTRNA1-1. The chain is U6 snRNA phosphodiesterase 1 from Mus musculus (Mouse).